A 310-amino-acid polypeptide reads, in one-letter code: GMP synthase [glutamine-hydrolyzing] subunit B (310 aa).

The GMPS ATP-PPase domain occupies 1 to 187 (MSTSSYIDQI…LGLRTDLQPF (187 aa)). 27–33 (SGGQDSS) is an ATP binding site.

In terms of assembly, heterodimer composed of a glutamine amidotransferase subunit (A) and a GMP-binding subunit (B).

The enzyme catalyses XMP + L-glutamine + ATP + H2O = GMP + L-glutamate + AMP + diphosphate + 2 H(+). The protein operates within purine metabolism; GMP biosynthesis; GMP from XMP (L-Gln route): step 1/1. Its function is as follows. Catalyzes the synthesis of GMP from XMP. The sequence is that of GMP synthase [glutamine-hydrolyzing] subunit B (guaAB) from Thermoplasma acidophilum (strain ATCC 25905 / DSM 1728 / JCM 9062 / NBRC 15155 / AMRC-C165).